We begin with the raw amino-acid sequence, 791 residues long: Putative DNA (cytosine-5)-methyltransferase CMT1 (791 aa).

The segment at 37–59 is disordered; the sequence is YQSKKTKLQAPTKKPANKGGKKE. Residues 79–199 form the BAH domain; that stretch reads VLINLNDDVY…VPYLNFTSAD (121 aa). Residues 225–768 form the SAM-dependent MTase C5-type domain; it reads KFLLDLYSGC…YAFGMASQGL (544 aa). The stretch at 308–333 forms a coiled coil; that stretch reads VESISELEDEEVEENDDIDEASTGAE. Positions 339–404 constitute a Chromo domain; it reads FEVEKFLGIM…DGFKSHLLPL (66 aa). Cys417 is an active-site residue.

Belongs to the class I-like SAM-binding methyltransferase superfamily. C5-methyltransferase family. As to expression, expressed in flowers. Not detected in leaves, roots, seedlings and plants prior formation of flower buds.

It localises to the nucleus. The enzyme catalyses a 2'-deoxycytidine in DNA + S-adenosyl-L-methionine = a 5-methyl-2'-deoxycytidine in DNA + S-adenosyl-L-homocysteine + H(+). Its function is as follows. May be involved in the CpXpG methylation and in gene silencing. This chain is Putative DNA (cytosine-5)-methyltransferase CMT1 (CMT1), found in Arabidopsis thaliana (Mouse-ear cress).